Consider the following 284-residue polypeptide: Probable endonuclease 4 (284 aa).

Positions 66, 106, 142, 176, 179, 213, 226, 228, and 258 each coordinate Zn(2+).

This sequence belongs to the AP endonuclease 2 family. Requires Zn(2+) as cofactor.

The catalysed reaction is Endonucleolytic cleavage to 5'-phosphooligonucleotide end-products.. In terms of biological role, endonuclease IV plays a role in DNA repair. It cleaves phosphodiester bonds at apurinic or apyrimidinic (AP) sites, generating a 3'-hydroxyl group and a 5'-terminal sugar phosphate. The chain is Probable endonuclease 4 from Natranaerobius thermophilus (strain ATCC BAA-1301 / DSM 18059 / JW/NM-WN-LF).